The following is a 590-amino-acid chain: Myo-inositol transporter 3C (590 aa).

Residues 1-63 are Cytoplasmic-facing; the sequence is MSRTPSSLDK…GEDKVTPYLC (63 aa). A helical transmembrane segment spans residues 64-86; sequence FLISASAIAGFLFGYDTGVVGVA. The Extracellular portion of the chain corresponds to 87-105; the sequence is LPLVGTDLGGSVLSSSQQE. The chain crosses the membrane as a helical span at residues 106 to 126; it reads IITAGTTIGAIFGSAILGGWG. Over 127 to 132 the chain is Cytoplasmic; the sequence is DRLGRK. A helical membrane pass occupies residues 133-153; that stretch reads VAILIADVFFTVGAVLIAASY. Topologically, residues 154 to 162 are extracellular; the sequence is SVPQMIVGR. A helical transmembrane segment spans residues 163 to 183; that stretch reads IVLGVGVGGAAAIAPLFITET. Topologically, residues 184 to 192 are cytoplasmic; that stretch reads APTAVRGRC. Residues 193 to 213 form a helical membrane-spanning segment; that stretch reads IGVNAFFIPFGQVISEAIGAG. Residues 214–222 lie on the Extracellular side of the membrane; the sequence is VQDMKNGWR. A helical transmembrane segment spans residues 223–243; the sequence is LLFALGAVPSLFQLILFHYLP. Residues 244-325 are Cytoplasmic-facing; the sequence is ESPRILILRG…TVSLIQMAGQ (82 aa). Residues 326–346 form a helical membrane-spanning segment; that stretch reads LSGFNTLLYYAGTLFSLLGLT. Residues 347 to 349 lie on the Extracellular side of the membrane; it reads NPA. Residues 350–370 traverse the membrane as a helical segment; it reads LGGLIPAGTNAFFVLVGMTLV. At 371 to 376 the chain is on the cytoplasmic side; sequence DKVGRR. Residues 377–397 form a helical membrane-spanning segment; sequence GLLMFGVPIMLAGLVWNIVAF. The Extracellular segment spans residues 398 to 417; that stretch reads HYLCIPTGGLLDTSYKYDTK. Residues 418 to 438 form a helical membrane-spanning segment; that stretch reads LVGIVIGGIVFFTTGFGLTYS. Residues 439–454 lie on the Cytoplasmic side of the membrane; sequence HLAWYQSEFLALEVRS. The helical transmembrane segment at 455–475 threads the bilayer; it reads VGSGIATTANWVANLVVSVSY. Residues 476–485 are Extracellular-facing; that stretch reads LTELETLTPS. Residues 486 to 506 form a helical membrane-spanning segment; it reads GTYGLYLGFSVVFFIFAVFCY. The Cytoplasmic segment spans residues 507-590; sequence PETKQLSIDE…NGAKRFPISR (84 aa).

The protein belongs to the major facilitator superfamily. Sugar transporter (TC 2.A.1.1) family.

It is found in the cell membrane. It carries out the reaction myo-inositol(out) + H(+)(out) = myo-inositol(in) + H(+)(in). Functionally, major transporter for myo-inositol. Plays a role in the traversal of the host blood-brain barrier. This is Myo-inositol transporter 3C from Cryptococcus neoformans var. grubii serotype A (strain H99 / ATCC 208821 / CBS 10515 / FGSC 9487) (Filobasidiella neoformans var. grubii).